A 679-amino-acid chain; its full sequence is Transketolase 10 (679 aa).

Residue His-40 coordinates substrate. Thiamine diphosphate is bound by residues His-80 and Gly-129–Leu-131. Asp-170 contacts Mg(2+). Thiamine diphosphate contacts are provided by Gly-171 and Asn-200. Positions 200 and 202 each coordinate Mg(2+). 3 residues coordinate substrate: His-277, Arg-371, and Ser-398. His-277 is a thiamine diphosphate binding site. Positions 425 and 452 each coordinate thiamine diphosphate. The active-site Proton donor is the Glu-425. Residues His-476, Asp-484, and Arg-535 each contribute to the substrate site.

Belongs to the transketolase family. As to quaternary structure, homodimer. Requires Mg(2+) as cofactor. The cofactor is Ca(2+). Mn(2+) serves as cofactor. It depends on Co(2+) as a cofactor. Thiamine diphosphate is required as a cofactor. Leaves.

It carries out the reaction D-sedoheptulose 7-phosphate + D-glyceraldehyde 3-phosphate = aldehydo-D-ribose 5-phosphate + D-xylulose 5-phosphate. Its function is as follows. Could be involved in the conversion of sugars, which are a major phenomenon in the rehydration process. In terms of biological role, catalyzes the transfer of a two-carbon ketol group from a ketose donor to an aldose acceptor, via a covalent intermediate with the cofactor thiamine pyrophosphate. This chain is Transketolase 10 (TKT10), found in Craterostigma plantagineum (Blue gem).